The primary structure comprises 252 residues: tRNA (guanine-N(1)-)-methyltransferase (252 aa).

S-adenosyl-L-methionine contacts are provided by residues Gly-113 and 133-138 (VGDFVL).

The protein belongs to the RNA methyltransferase TrmD family. In terms of assembly, homodimer.

The protein resides in the cytoplasm. It catalyses the reaction guanosine(37) in tRNA + S-adenosyl-L-methionine = N(1)-methylguanosine(37) in tRNA + S-adenosyl-L-homocysteine + H(+). Functionally, specifically methylates guanosine-37 in various tRNAs. The protein is tRNA (guanine-N(1)-)-methyltransferase of Francisella tularensis subsp. holarctica (strain FTNF002-00 / FTA).